Reading from the N-terminus, the 992-residue chain is MKGLSGSRSHHHGITCEAACDSLSHHSDHKPYLLSPVDHHPADHPYYTQRNSFQAECVGPFSDPLASSTFPRRHYTSQQELKDESALVPRTLATKANRLPTNLLDQFERQLPLSRDGYHTLQYKRTAVEHRSDSPGRIRHLVHSVQKLFTKSHSLEGPSKGSVNGGKASPDESQTLRYGKRSKSKERRSESKARSNASNASPTSPSWWSSDDNLDGDMCLYHTPSGVMTMGRCPDRSASQYFMEAYNTISEQAVKASRSNNDIKCSTCANLPVTLDAPLLKKSAWSSTLTVSRAREVYQKASVNMDQAMVKSEACQQERSCQYLQVPQDEWSGYTPRGKDDEIPCRRMRSGSYIKAMGDEDSGDSDTSPKPSPKVAARRESYLKATQPSLTELTTLKISNEHSPKLQIRSHSYLRAVSEVSINRSLDSLDPAGLLTSPKFRSRNESYMRAMSTISQVSEMEVNGQFESVCESVFSELESQAVEALDLPLPGCFRMRSHSYVRAIEKGCSQDDECVSLRSSSPPRTTTTVRTIQSSTGVIKLSSAVEVSSCITTYKKTPPPVPPRTTTKPFISITAQSSTESAQDAYMDGQGQRGDMISQSGLSNSTESLDSMKALTAAIEAANAQIHGPASQHMGSNAAAVTTTTTIATVTTEDRKKDFKKNRCLSIGIQVDDAEEPEKMAESKTSNKFQSVGVQVEEEKCFRRFTRSNSVTTAVQADLDFHDNLENSLESIEDNSCPGPMARQFSRDASTSTVSIQGSGNHYHACAADDDFDTDFDPSILPPPDPWIDSITEDPLEAVQRSVCHRDGHWFLKLLQAERDRMEGWCKLMEREERENNLPEDILGKIRTAVGSAQLLMAQKFYQFRELCEENLNPNAHPRPTSQDLAGFWDMLQLSIENISMKFDELHQLKANNWKQMDPLDKKERRAPPPVPKKPAKGPAPLIRERSLESSQRQEARKRLMAAKRAASVRQNSATESAESIEIYIPEAQTRL.

Disordered stretches follow at residues Thr-150 to Ser-209 and Lys-355 to Ala-376. A Phosphoserine modification is found at Ser-169. Low complexity predominate over residues Arg-194–Ser-209. Phosphoserine is present on residues Ser-362, Ser-365, Ser-368, Ser-372, Ser-389, Ser-418, Ser-421, Ser-425, Ser-428, Ser-437, Ser-509, Ser-516, and Ser-578. Thr-579 is modified (phosphothreonine). A phosphoserine mark is found at Ser-581 and Ser-605. Thr-606 is subject to Phosphothreonine. Phosphoserine occurs at positions 608 and 611. Interaction with DYL2 regions lie at residues Leu-665 to Glu-676 and Asn-687 to Glu-698. The tract at residues Trp-914–Ser-980 is disordered. Composition is skewed to basic and acidic residues over residues Asp-918 to Ala-927 and Ile-943 to Lys-958. A Phosphoserine modification is found at Ser-947. A compositionally biased stretch (polar residues) spans Val-969 to Ala-978. Positions Thr-990 to Leu-992 match the PDZ-binding motif.

This sequence belongs to the SAPAP family. In terms of assembly, interacts with the guanylate kinase-like domain of DLG1, DLG2, DLG3, DLG4 and AIP1. Interacts with the PDZ domain of SHANK1, SHANK2 and SHANK3. Found in a complex with DLG4 and SHANK1, SHANK2 or SHANK3. Found in a complex with DLG4 and BEGAIN. Interacts with DYL2 and LRFN1. Interacts with MPP2 (via the SH3-Guanylate kinase-like sub-module). Ubiquitinated by TRIM3; leading to proteasomal degradation. Highest levels in the neocortex, part of the hippocampus, the granule cell layer of the cerebellum, the glomerular layer of the olfactory bulb, the inner plexiform layer of the retina, the ventral and dorsal horn of the spinal cord, the neuromuscular junction and the submandibular ganglion.

The protein resides in the cell membrane. It localises to the postsynaptic density. The protein localises to the synapse. Functionally, part of the postsynaptic scaffold in neuronal cells. This Mus musculus (Mouse) protein is Disks large-associated protein 1 (Dlgap1).